Consider the following 239-residue polypeptide: Ribulose-phosphate 3-epimerase (239 aa).

Residue serine 9 coordinates substrate. The a divalent metal cation site is built by histidine 34, aspartate 36, and histidine 78. Aspartate 36 serves as the catalytic Proton acceptor. Substrate-binding positions include histidine 78, 154 to 157 (GFGG), 183 to 185 (DGG), and 205 to 207 (GTS). Aspartate 183 is a binding site for a divalent metal cation. Aspartate 183 acts as the Proton donor in catalysis.

The protein belongs to the ribulose-phosphate 3-epimerase family. It depends on Co(2+) as a cofactor. The cofactor is Fe(2+). Mn(2+) is required as a cofactor. Zn(2+) serves as cofactor.

It carries out the reaction D-ribulose 5-phosphate = D-xylulose 5-phosphate. Its pathway is carbohydrate degradation; pentose phosphate pathway; D-xylulose 5-phosphate from D-ribulose 5-phosphate (non-oxidative stage): step 1/1. In terms of biological role, catalyzes the reversible epimerization of D-ribulose 5-phosphate to D-xylulose 5-phosphate. The polypeptide is Ribulose-phosphate 3-epimerase (RPE1) (Eremothecium gossypii (strain ATCC 10895 / CBS 109.51 / FGSC 9923 / NRRL Y-1056) (Yeast)).